We begin with the raw amino-acid sequence, 220 residues long: Competence protein ComFC (220 aa).

This sequence belongs to the ComF/GntX family. As to quaternary structure, monomer and dimer in solution. Interacts with ComFA and DprA; ComFA-ComFC form rings about 150 Angstroms in diameter with apparent 6-fold symmetry.

Involved in transformation (genetic competence for DNA uptake). The chain is Competence protein ComFC from Streptococcus pneumoniae (strain ATCC BAA-255 / R6).